The chain runs to 218 residues: 3,4-dihydroxy-2-butanone 4-phosphate synthase (218 aa).

D-ribulose 5-phosphate-binding positions include 38–39 (RE), aspartate 43, 151–155 (RRGHT), and glutamate 175. Glutamate 39 is a binding site for Mg(2+). Histidine 154 contacts Mg(2+).

Belongs to the DHBP synthase family. As to quaternary structure, homodimer. The cofactor is Mg(2+). It depends on Mn(2+) as a cofactor.

The catalysed reaction is D-ribulose 5-phosphate = (2S)-2-hydroxy-3-oxobutyl phosphate + formate + H(+). The protein operates within cofactor biosynthesis; riboflavin biosynthesis; 2-hydroxy-3-oxobutyl phosphate from D-ribulose 5-phosphate: step 1/1. Functionally, catalyzes the conversion of D-ribulose 5-phosphate to formate and 3,4-dihydroxy-2-butanone 4-phosphate. This is 3,4-dihydroxy-2-butanone 4-phosphate synthase from Shewanella frigidimarina (strain NCIMB 400).